We begin with the raw amino-acid sequence, 485 residues long: N-succinylglutamate 5-semialdehyde dehydrogenase (485 aa).

220–225 (GSANTG) contributes to the NAD(+) binding site. Catalysis depends on residues Glu243 and Cys278.

The protein belongs to the aldehyde dehydrogenase family. AstD subfamily.

It carries out the reaction N-succinyl-L-glutamate 5-semialdehyde + NAD(+) + H2O = N-succinyl-L-glutamate + NADH + 2 H(+). It functions in the pathway amino-acid degradation; L-arginine degradation via AST pathway; L-glutamate and succinate from L-arginine: step 4/5. Its function is as follows. Catalyzes the NAD-dependent reduction of succinylglutamate semialdehyde into succinylglutamate. The sequence is that of N-succinylglutamate 5-semialdehyde dehydrogenase from Aliivibrio salmonicida (strain LFI1238) (Vibrio salmonicida (strain LFI1238)).